The following is a 156-amino-acid chain: Ribosomal RNA large subunit methyltransferase H (156 aa).

S-adenosyl-L-methionine-binding positions include L73, G104, and 123–128 (LSALTL).

Belongs to the RNA methyltransferase RlmH family. Homodimer.

The protein resides in the cytoplasm. The enzyme catalyses pseudouridine(1915) in 23S rRNA + S-adenosyl-L-methionine = N(3)-methylpseudouridine(1915) in 23S rRNA + S-adenosyl-L-homocysteine + H(+). In terms of biological role, specifically methylates the pseudouridine at position 1915 (m3Psi1915) in 23S rRNA. This chain is Ribosomal RNA large subunit methyltransferase H, found in Shewanella sp. (strain MR-7).